Reading from the N-terminus, the 514-residue chain is 1,25-dihydroxyvitamin D(3) 24-hydroxylase, mitochondrial (514 aa).

The N-terminal 35 residues, 1 to 35, are a transit peptide targeting the mitochondrion; it reads MSCPIDKRRTLIAFLRRLRDLGQPPRSVTSKASAS. C462 contacts heme.

This sequence belongs to the cytochrome P450 family. It depends on heme as a cofactor.

It localises to the mitochondrion. It catalyses the reaction calcitriol + 2 reduced [adrenodoxin] + O2 + 2 H(+) = calcitetrol + 2 oxidized [adrenodoxin] + H2O. The catalysed reaction is calcitetrol + 2 reduced [adrenodoxin] + O2 + 2 H(+) = (1S)-1,25-dihydroxy-24-oxocalciol + 2 oxidized [adrenodoxin] + 2 H2O. It carries out the reaction (1S)-1,25-dihydroxy-24-oxocalciol + 2 reduced [adrenodoxin] + O2 + 2 H(+) = (1S)-1,23,25-trihydroxy-24-oxocalciol + 2 oxidized [adrenodoxin] + H2O. The enzyme catalyses (1S)-1,23-dihydroxy-24,25,26,27-tetranorcalciol + 2 reduced [adrenodoxin] + O2 + 2 H(+) = (1S)-1-hydroxy-23-oxo-24,25,26,27-tetranorcalciol + 2 oxidized [adrenodoxin] + 2 H2O. It catalyses the reaction (1S)-1-hydroxy-23-oxo-24,25,26,27-tetranorcalciol + 2 reduced [adrenodoxin] + O2 + H(+) = calcitroate + 2 oxidized [adrenodoxin] + H2O. The catalysed reaction is calcidiol + 2 reduced [adrenodoxin] + O2 + 2 H(+) = secalciferol + 2 oxidized [adrenodoxin] + H2O. It carries out the reaction secalciferol + 2 reduced [adrenodoxin] + O2 + 2 H(+) = 25-hydroxy-24-oxocalciol + 2 oxidized [adrenodoxin] + 2 H2O. The enzyme catalyses 25-hydroxy-24-oxocalciol + 2 reduced [adrenodoxin] + O2 + 2 H(+) = 23S,25-dihydroxy-24-oxocholecalciferol + 2 oxidized [adrenodoxin] + H2O. It catalyses the reaction 20S,23-dihydroxycholecalciferol + 2 reduced [adrenodoxin] + O2 + 2 H(+) = 20S,23,25-trihydroxycholecalciferol + 2 oxidized [adrenodoxin] + H2O. The catalysed reaction is 20S,23-dihydroxycholecalciferol + 2 reduced [adrenodoxin] + O2 + 2 H(+) = 20S,23,24-trihydroxycholecalciferol + 2 oxidized [adrenodoxin] + H2O. It carries out the reaction 20S-hydroxycholecalciferol + 2 reduced [adrenodoxin] + O2 + 2 H(+) = 20S,25-dihydroxycholecalciferol + 2 oxidized [adrenodoxin] + H2O. The enzyme catalyses 20S-hydroxycholecalciferol + 2 reduced [adrenodoxin] + O2 + 2 H(+) = 20S,24S-dihydroxycholecalciferol + 2 oxidized [adrenodoxin] + H2O. It catalyses the reaction 20S-hydroxycholecalciferol + 2 reduced [adrenodoxin] + O2 + 2 H(+) = 20S,24R-dihydroxycholecalciferol + 2 oxidized [adrenodoxin] + H2O. In terms of biological role, a cytochrome P450 monooxygenase with a key role in vitamin D catabolism and calcium homeostasis. Via C24-oxidation pathway, catalyzes the inactivation of both the vitamin D precursor calcidiol (25-hydroxyvitamin D(3)) and the active hormone calcitriol (1-alpha,25-dihydroxyvitamin D(3)). With initial hydroxylation at C-24 (via C24-oxidation pathway), performs a sequential 6-step oxidation of calcitriol leading to the formation of the biliary metabolite calcitroic acid. Hydroxylates at C-24 or C-25 other vitamin D active metabolites, such as CYP11A1-derived secosteroids 20S-hydroxycholecalciferol and 20S,23-dihydroxycholecalciferol. Mechanistically, uses molecular oxygen inserting one oxygen atom into a substrate, and reducing the second into a water molecule, with two electrons provided by NADPH via FDXR/adrenodoxin reductase and FDX1/adrenodoxin. The polypeptide is 1,25-dihydroxyvitamin D(3) 24-hydroxylase, mitochondrial (Cyp24a1) (Rattus norvegicus (Rat)).